Reading from the N-terminus, the 202-residue chain is Recombination protein RecR (202 aa).

Residues 61–76 (CARCNSFTEDEVCATC) form a C4-type zinc finger. Positions 84–179 (GLLCIVETPA…KVTRLARGVP (96 aa)) constitute a Toprim domain.

It belongs to the RecR family.

Its function is as follows. May play a role in DNA repair. It seems to be involved in an RecBC-independent recombinational process of DNA repair. It may act with RecF and RecO. The protein is Recombination protein RecR of Bordetella pertussis (strain Tohama I / ATCC BAA-589 / NCTC 13251).